The following is a 177-amino-acid chain: Bifunctional protein PyrR (177 aa).

The PRPP-binding signature appears at 99–111 (VILIDDVLYTGRT).

It belongs to the purine/pyrimidine phosphoribosyltransferase family. PyrR subfamily. As to quaternary structure, homodimer and homohexamer; in equilibrium.

It catalyses the reaction UMP + diphosphate = 5-phospho-alpha-D-ribose 1-diphosphate + uracil. Its function is as follows. Regulates transcriptional attenuation of the pyrimidine nucleotide (pyr) operon by binding in a uridine-dependent manner to specific sites on pyr mRNA. This disrupts an antiterminator hairpin in the RNA and favors formation of a downstream transcription terminator, leading to a reduced expression of downstream genes. Also displays a weak uracil phosphoribosyltransferase activity which is not physiologically significant. The chain is Bifunctional protein PyrR from Pediococcus pentosaceus (strain ATCC 25745 / CCUG 21536 / LMG 10740 / 183-1w).